The primary structure comprises 177 residues: Translation initiation factor IF-3 (177 aa).

The protein belongs to the IF-3 family. Monomer.

The protein localises to the cytoplasm. Functionally, IF-3 binds to the 30S ribosomal subunit and shifts the equilibrium between 70S ribosomes and their 50S and 30S subunits in favor of the free subunits, thus enhancing the availability of 30S subunits on which protein synthesis initiation begins. This Nostoc sp. (strain PCC 7120 / SAG 25.82 / UTEX 2576) protein is Translation initiation factor IF-3.